Consider the following 263-residue polypeptide: Undecaprenyl-diphosphatase 2 (263 aa).

The next 8 helical transmembrane spans lie at 17–37, 42–62, 83–103, 106–126, 142–162, 183–203, 216–236, and 242–262; these read TEFLPVSSTGHMILTGHLIGF, AKVFEVVIQLGSILAVVVIFW, LHIIIGMIPAGVLGVLFHSAI, VLFGPGPVVISLVAGGILMIV, ITYKQAFTIGMFQCLALWPGF, AEYTFILAVPMMVAASGLDLI, LFATGFITAFVVAMLAIVSFL, and VKLTPFAYYRFILAAVFYFFI.

The protein belongs to the UppP family.

Its subcellular location is the cell membrane. The catalysed reaction is di-trans,octa-cis-undecaprenyl diphosphate + H2O = di-trans,octa-cis-undecaprenyl phosphate + phosphate + H(+). Catalyzes the dephosphorylation of undecaprenyl diphosphate (UPP). Confers resistance to bacitracin. The polypeptide is Undecaprenyl-diphosphatase 2 (Bacillus anthracis).